A 397-amino-acid polypeptide reads, in one-letter code: Elongation factor Tu (397 aa).

The tr-type G domain occupies 10-207 (KPHVNIGTIG…ACDSYIPEPE (198 aa)). The segment at 19 to 26 (GHIDHGKT) is G1. 19–26 (GHIDHGKT) provides a ligand contact to GTP. Position 26 (Thr-26) interacts with Mg(2+). The tract at residues 60–64 (GITIA) is G2. Residues 81–84 (DCPG) are G3. GTP-binding positions include 81 to 85 (DCPGH) and 136 to 139 (NKCD). The tract at residues 136-139 (NKCD) is G4. The interval 174 to 176 (SAL) is G5.

It belongs to the TRAFAC class translation factor GTPase superfamily. Classic translation factor GTPase family. EF-Tu/EF-1A subfamily. In terms of assembly, monomer.

It localises to the cytoplasm. It catalyses the reaction GTP + H2O = GDP + phosphate + H(+). In terms of biological role, GTP hydrolase that promotes the GTP-dependent binding of aminoacyl-tRNA to the A-site of ribosomes during protein biosynthesis. This Oleidesulfovibrio alaskensis (strain ATCC BAA-1058 / DSM 17464 / G20) (Desulfovibrio alaskensis) protein is Elongation factor Tu.